A 107-amino-acid polypeptide reads, in one-letter code: MTKSELVAQLASRFPQLVLKDADFAVKTMLDAMSDALSKGHRIEIRGFGSFGLNRRPARVGRNPKSGEKVQVPEKFVPHFKPGKELRERVDGRAGEPLKADEPDDER.

The segment at 78 to 107 is disordered; the sequence is PHFKPGKELRERVDGRAGEPLKADEPDDER. The span at 82–101 shows a compositional bias: basic and acidic residues; that stretch reads PGKELRERVDGRAGEPLKAD.

This sequence belongs to the bacterial histone-like protein family. As to quaternary structure, heterodimer of an alpha and a beta chain.

Its function is as follows. This protein is one of the two subunits of integration host factor, a specific DNA-binding protein that functions in genetic recombination as well as in transcriptional and translational control. This chain is Integration host factor subunit beta, found in Burkholderia multivorans (strain ATCC 17616 / 249).